A 1098-amino-acid chain; its full sequence is PAN2-PAN3 deadenylation complex catalytic subunit PAN2 (1098 aa).

WD repeat units follow at residues 19-58 (ASKDPVTSLLFDSVHNLLWCGDSSGSARSFTPNAGYPFQL), 150-190 (TGFD…SVKS), 253-293 (PFPN…KLNV), and 300-338 (PASPGISRMEISDNGEYICCSEGRSLHLWSFTSDTNFVN). The linker stretch occupies residues 340 to 466 (PAPLEEQDIP…SIFHLKSPTS (127 aa)). Residues 417–442 (RNISQPYQSLREPPGSNSNAPRFISE) form a disordered region. The USP domain occupies 466-839 (SVPHCYSRLQ…KPVIIVYSEP (374 aa)). The region spanning 894–1067 (IAIDAEFVVS…EDAYTALMLF (174 aa)) is the Exonuclease domain. Residues D897, E899, D1006, and D1059 each contribute to the a divalent metal cation site.

It belongs to the peptidase C19 family. PAN2 subfamily. In terms of assembly, forms a heterotrimer with an asymmetric homodimer of the regulatory subunit PAN3 to form the poly(A)-nuclease (PAN) deadenylation complex. Requires a divalent metal cation as cofactor.

The protein localises to the cytoplasm. The enzyme catalyses Exonucleolytic cleavage of poly(A) to 5'-AMP.. Positively regulated by the regulatory subunit PAN3. Functionally, catalytic subunit of the poly(A)-nuclease (PAN) deadenylation complex, one of two cytoplasmic mRNA deadenylases involved in mRNA turnover. PAN specifically shortens poly(A) tails of RNA and the activity is stimulated by poly(A)-binding protein PAB1. PAN deadenylation is followed by rapid degradation of the shortened mRNA tails by the CCR4-NOT complex. Deadenylated mRNAs are then degraded by two alternative mechanisms, namely exosome-mediated 3'-5' exonucleolytic degradation, or deadenylation-dependent mRNA decaping and subsequent 5'-3' exonucleolytic degradation by XRN1. May also be involved in post-transcriptional maturation of mRNA poly(A) tails. In Meyerozyma guilliermondii (strain ATCC 6260 / CBS 566 / DSM 6381 / JCM 1539 / NBRC 10279 / NRRL Y-324) (Yeast), this protein is PAN2-PAN3 deadenylation complex catalytic subunit PAN2.